Consider the following 220-residue polypeptide: Protein-methionine-sulfoxide reductase heme-binding subunit MsrQ (220 aa).

Helical transmembrane passes span 20–40, 52–72, 86–106, 122–142, and 159–179; these read IWLLYAVGFVPAVWTFYLGAS, EHTLGLWALRFLILTLMVTPI, ALGLLAFYYALMHFATYMVLD, PFITIGMISLVLLVPLALTSN, and LVYVAIAGGAIHFIMSVKSWP.

This sequence belongs to the MsrQ family. In terms of assembly, heterodimer of a catalytic subunit (MsrP) and a heme-binding subunit (MsrQ). Requires FMN as cofactor. It depends on heme b as a cofactor.

It is found in the cell inner membrane. Functionally, part of the MsrPQ system that repairs oxidized periplasmic proteins containing methionine sulfoxide residues (Met-O), using respiratory chain electrons. Thus protects these proteins from oxidative-stress damage caused by reactive species of oxygen and chlorine generated by the host defense mechanisms. MsrPQ is essential for the maintenance of envelope integrity under bleach stress, rescuing a wide series of structurally unrelated periplasmic proteins from methionine oxidation. MsrQ provides electrons for reduction to the reductase catalytic subunit MsrP, using the quinone pool of the respiratory chain. This chain is Protein-methionine-sulfoxide reductase heme-binding subunit MsrQ, found in Brucella anthropi (strain ATCC 49188 / DSM 6882 / CCUG 24695 / JCM 21032 / LMG 3331 / NBRC 15819 / NCTC 12168 / Alc 37) (Ochrobactrum anthropi).